We begin with the raw amino-acid sequence, 282 residues long: MGRVTERRKVIRIRDGAVSTRPDTLVAEEPLEIRLNGKPLAITMRTPGDDFALAAGFLVSEGVLGEADELQNIVYCAGATVDGSNTYNVVDVRTAPGVVLPDITLERNVYTTSSCGLCGKASLDAVRTTARWTIDDTPPVRLEPELLASLPDRLRAAQRVFDRTGGLHAAALFTEEGELVDIREDVGRHNAVDKLVGRALQSGSLPLSRTVLLVSGRASFELAQKAVMAGIPVLAAVSAPSSLAVDLAAESGLTLVGFLRGASMNVYAGEHRIALRAAAAQG.

The active-site Cysteine persulfide intermediate is Cys115.

It belongs to the FdhD family.

It localises to the cytoplasm. In terms of biological role, required for formate dehydrogenase (FDH) activity. Acts as a sulfur carrier protein that transfers sulfur from IscS to the molybdenum cofactor prior to its insertion into FDH. This is Sulfur carrier protein FdhD from Streptomyces avermitilis (strain ATCC 31267 / DSM 46492 / JCM 5070 / NBRC 14893 / NCIMB 12804 / NRRL 8165 / MA-4680).